Consider the following 378-residue polypeptide: Alanine racemase (378 aa).

The active-site Proton acceptor; specific for D-alanine is the lysine 40. Residue lysine 40 is modified to N6-(pyridoxal phosphate)lysine. Residue arginine 140 coordinates substrate. The active-site Proton acceptor; specific for L-alanine is tyrosine 270. Position 317 (methionine 317) interacts with substrate.

This sequence belongs to the alanine racemase family. It depends on pyridoxal 5'-phosphate as a cofactor.

It carries out the reaction L-alanine = D-alanine. Its pathway is amino-acid biosynthesis; D-alanine biosynthesis; D-alanine from L-alanine: step 1/1. Functionally, catalyzes the interconversion of L-alanine and D-alanine. May also act on other amino acids. In Lacticaseibacillus casei (strain BL23) (Lactobacillus casei), this protein is Alanine racemase (alr).